The primary structure comprises 366 residues: Outer membrane porin C 2 (366 aa).

Residues 1–21 (MKLKIVAVVVTGLLAANVAHA) form the signal peptide.

It belongs to the Gram-negative porin family. Homotrimer. Forms mixed heterotrimers with OmpF and with PhoE; other mixed heterotrimers are also probable.

The protein resides in the cell outer membrane. Functionally, forms pores that allow passive diffusion of small molecules across the outer membrane. Plays a role in virulence. In Shigella flexneri serotype 5a (strain M90T), this protein is Outer membrane porin C 2.